A 520-amino-acid polypeptide reads, in one-letter code: BBSome complex member BBS4 (520 aa).

The disordered stretch occupies residues 1–26 (MAEVKLGMKTQVPASVESQKPRSKKA). Residues 1-66 (MAEVKLGMKT…EQLQETQGLC (66 aa)) are required for localization to centrosomes. TPR repeat units lie at residues 67–100 (EYAI…SPQC), 102–134 (DNLK…NQKD), 135–167 (WEIC…LNKH), 168–201 (DLTY…SPEN), 203–235 (ELLT…DPAN), 237–269 (KAIL…IPES), 270–303 (PPLW…APFD), 304–337 (WKIL…QPKM), 339–371 (ELYM…DKCN), and 373–408 (LVNL…LKDN). The tract at residues 101–337 (ADNLKQVARS…SAAINFQPKM (237 aa)) is interaction with PCM1. Residues 338 to 520 (GELYMLLAVA…TEASEQKKEK (183 aa)) form a required for localization to centrosomes region. The segment at 488–520 (AQLPKPPSLPLEPEPEPTVEASPTEASEQKKEK) is disordered.

Belongs to the BBS4 family. As to quaternary structure, part of BBSome complex, that contains BBS1, BBS2, BBS4, BBS5, BBS7, BBS8/TTC8, BBS9 and BBIP10. Interacts with PCM1 and DCTN1. Interacts with DC28B. Interacts with ALDOB and C2CD3. Interacts with PKD1. Interacts with CEP290. Interacts with DLEC1. In terms of tissue distribution, expressed in the hippocampus and dentate gyrus, the columnar epithelial cells of bronchioles, the olfactory epithelium and the inner segment and outer nuclear layer of the retina. Expressed in testis.

The protein localises to the cytoplasm. Its subcellular location is the cytoskeleton. It localises to the microtubule organizing center. The protein resides in the centrosome. It is found in the cell projection. The protein localises to the cilium membrane. Its subcellular location is the centriolar satellite. It localises to the cilium. The protein resides in the flagellum. Its function is as follows. The BBSome complex is thought to function as a coat complex required for sorting of specific membrane proteins to the primary cilia. The BBSome complex is required for ciliogenesis but is dispensable for centriolar satellite function. This ciliogenic function is mediated in part by the Rab8 GDP/GTP exchange factor, which localizes to the basal body and contacts the BBSome. Rab8(GTP) enters the primary cilium and promotes extension of the ciliary membrane. Firstly the BBSome associates with the ciliary membrane and binds to RAB3IP/Rabin8, the guanosyl exchange factor (GEF) for Rab8 and then the Rab8-GTP localizes to the cilium and promotes docking and fusion of carrier vesicles to the base of the ciliary membrane. The BBSome complex, together with the LTZL1, controls SMO ciliary trafficking and contributes to the sonic hedgehog (SHH) pathway regulation. Required for proper BBSome complex assembly and its ciliary localization. Required for microtubule anchoring at the centrosome but not for microtubule nucleation. May be required for the dynein-mediated transport of pericentriolar proteins to the centrosome. This is BBSome complex member BBS4 (Bbs4) from Mus musculus (Mouse).